We begin with the raw amino-acid sequence, 661 residues long: CD180 antigen (661 aa).

The signal sequence occupies residues 1-23; the sequence is MAFDVSCFFWVVLFSAGCKVITS. The Extracellular portion of the chain corresponds to 24 to 626; sequence WDQMCIEKEA…KLSDVKLSCG (603 aa). In terms of domain architecture, LRRNT spans 33–53; sequence ANKTYNCENLGLSEIPDTLPN. 4 N-linked (GlcNAc...) asparagine glycosylation sites follow: asparagine 34, asparagine 53, asparagine 70, and asparagine 78. LRR repeat units follow at residues 54 to 75, 78 to 99, 102 to 123, 126 to 147, 150 to 171, 174 to 195, and 201 to 221; these read TTEF…TFSR, NLTF…TFQS, QLST…SLNG, SLKH…PVHN, NLES…KDFP, NLKV…DMRS, and NLSL…AFDS. Asparagine 201, asparagine 234, and asparagine 244 each carry an N-linked (GlcNAc...) asparagine glycan. LRR repeat units lie at residues 275-296, 299-320, 322-343, 346-366, and 371-391; these read SVES…TFQC, QLQE…MKGL, LLKK…SAAN, SLTH…VGCL, and NLQT…CSLQ. Residues asparagine 394 and asparagine 402 are each glycosylated (N-linked (GlcNAc...) asparagine). LRR repeat units follow at residues 397–418, 421–442, 446–466, 470–493, 497–518, 521–544, and 546–564; these read HLQT…AFKE, QLEL…SPFQ, FLQV…HLLA, VLRH…NLLQ, SLEV…AFHS, KMSH…SHLK, and IYLN…RLLP. An N-linked (GlcNAc...) asparagine glycan is attached at asparagine 451. A glycan (N-linked (GlcNAc...) asparagine) is linked at asparagine 573. In terms of domain architecture, LRRCT spans 577 to 627; the sequence is NPLDCTCSNIHFLTWYKENLHKLEGSEETTCANPPSLRGVKLSDVKLSCGI. A helical membrane pass occupies residues 627–650; it reads ITAIGIFFLIVFLLLLAILLFFAV. Over 651–661 the chain is Cytoplasmic; it reads KYLLRWKYQHI.

The protein belongs to the Toll-like receptor family. In terms of assembly, M-shaped tetramer of two CD180-LY86 heterodimers. Expressed mainly on mature peripherical B cells. Detected in spleen, lymph node and appendix. Not detected in pre-B and -T cells.

The protein localises to the cell membrane. May cooperate with MD-1 and TLR4 to mediate the innate immune response to bacterial lipopolysaccharide (LPS) in B-cells. Leads to NF-kappa-B activation. Also involved in the life/death decision of B-cells. The chain is CD180 antigen (CD180) from Homo sapiens (Human).